Consider the following 427-residue polypeptide: Trigger factor (427 aa).

Positions 163 to 248 (GDTVVIDFVG…VNEVKAKELP (86 aa)) constitute a PPIase FKBP-type domain.

This sequence belongs to the FKBP-type PPIase family. Tig subfamily.

Its subcellular location is the cytoplasm. The catalysed reaction is [protein]-peptidylproline (omega=180) = [protein]-peptidylproline (omega=0). Its function is as follows. Involved in protein export. Acts as a chaperone by maintaining the newly synthesized protein in an open conformation. Functions as a peptidyl-prolyl cis-trans isomerase. The sequence is that of Trigger factor from Lactococcus lactis subsp. cremoris (strain SK11).